We begin with the raw amino-acid sequence, 339 residues long: D-erythrose-4-phosphate dehydrogenase (339 aa).

Residues 12–13 (RI) and Arg81 each bind NAD(+). Residues 154 to 156 (SCT), Arg200, 213 to 214 (TK), and Arg236 contribute to the substrate site. The active-site Nucleophile is the Cys155. Asn318 provides a ligand contact to NAD(+).

The protein belongs to the glyceraldehyde-3-phosphate dehydrogenase family. Epd subfamily. Homotetramer.

Its subcellular location is the cytoplasm. It catalyses the reaction D-erythrose 4-phosphate + NAD(+) + H2O = 4-phospho-D-erythronate + NADH + 2 H(+). It participates in cofactor biosynthesis; pyridoxine 5'-phosphate biosynthesis; pyridoxine 5'-phosphate from D-erythrose 4-phosphate: step 1/5. Functionally, catalyzes the NAD-dependent conversion of D-erythrose 4-phosphate to 4-phosphoerythronate. The protein is D-erythrose-4-phosphate dehydrogenase of Escherichia coli O45:K1 (strain S88 / ExPEC).